A 904-amino-acid polypeptide reads, in one-letter code: Alanine--tRNA ligase (904 aa).

His584, His588, Cys687, and His691 together coordinate Zn(2+).

This sequence belongs to the class-II aminoacyl-tRNA synthetase family. Zn(2+) serves as cofactor.

It is found in the cytoplasm. The enzyme catalyses tRNA(Ala) + L-alanine + ATP = L-alanyl-tRNA(Ala) + AMP + diphosphate. In terms of biological role, catalyzes the attachment of alanine to tRNA(Ala) in a two-step reaction: alanine is first activated by ATP to form Ala-AMP and then transferred to the acceptor end of tRNA(Ala). Also edits incorrectly charged Ser-tRNA(Ala) and Gly-tRNA(Ala) via its editing domain. The protein is Alanine--tRNA ligase of Mycobacterium tuberculosis (strain ATCC 25177 / H37Ra).